A 190-amino-acid polypeptide reads, in one-letter code: MEAETKTLPLENASILSEGSLQEGHRLWIGNLDPKITEYHLLRLLQKFGTVKQFDFLFHKSGALEGQPRGYCFVNFETKQEAEQAIQCLNGKLALSKKLVVRWAHAQVKRYDHNKNDKILPISLEPSSSTEPAQSNLSVTAKIKAIEAKLKMMAENPDAEYPAAPVYSYFKPPDKKRTTPYSRTAWKSRR.

One can recognise an RRM domain in the interval 25–106 (HRLWIGNLDP…KKLVVRWAHA (82 aa)). The tract at residues 166-190 (VYSYFKPPDKKRTTPYSRTAWKSRR) is disordered.

In Bos taurus (Bovine), this protein is Probable RNA-binding protein 18 (RBM18).